A 178-amino-acid chain; its full sequence is Large ribosomal subunit protein bL25 (178 aa).

The protein belongs to the bacterial ribosomal protein bL25 family. CTC subfamily. Part of the 50S ribosomal subunit; part of the 5S rRNA/L5/L18/L25 subcomplex. Contacts the 5S rRNA. Binds to the 5S rRNA independently of L5 and L18.

This is one of the proteins that binds to the 5S RNA in the ribosome where it forms part of the central protuberance. The sequence is that of Large ribosomal subunit protein bL25 from Campylobacter jejuni subsp. jejuni serotype O:6 (strain 81116 / NCTC 11828).